We begin with the raw amino-acid sequence, 293 residues long: Acetylglutamate kinase (293 aa).

Substrate is bound by residues 65 to 66 (GG), R87, and N180.

It belongs to the acetylglutamate kinase family. ArgB subfamily.

It localises to the cytoplasm. It catalyses the reaction N-acetyl-L-glutamate + ATP = N-acetyl-L-glutamyl 5-phosphate + ADP. It participates in amino-acid biosynthesis; L-arginine biosynthesis; N(2)-acetyl-L-ornithine from L-glutamate: step 2/4. Catalyzes the ATP-dependent phosphorylation of N-acetyl-L-glutamate. This chain is Acetylglutamate kinase, found in Cereibacter sphaeroides (strain ATCC 17029 / ATH 2.4.9) (Rhodobacter sphaeroides).